The sequence spans 151 residues: Transcriptional regulator MraZ (151 aa).

2 consecutive SpoVT-AbrB domains span residues 5-52 (ANAI…PLSE) and 81-124 (AVDL…DEDA).

The protein belongs to the MraZ family. As to quaternary structure, forms oligomers.

It is found in the cytoplasm. It localises to the nucleoid. The chain is Transcriptional regulator MraZ from Pseudomonas savastanoi pv. phaseolicola (strain 1448A / Race 6) (Pseudomonas syringae pv. phaseolicola (strain 1448A / Race 6)).